We begin with the raw amino-acid sequence, 195 residues long: Protein GrpE (195 aa).

The span at 1 to 20 shows a compositional bias: basic and acidic residues; sequence MSSKEQKTPDEQVLDQKEAA. The segment at 1–40 is disordered; that stretch reads MSSKEQKTPDEQVLDQKEAAKGQQADAAPETADVADPRDA.

Belongs to the GrpE family. Homodimer.

It is found in the cytoplasm. Functionally, participates actively in the response to hyperosmotic and heat shock by preventing the aggregation of stress-denatured proteins, in association with DnaK and GrpE. It is the nucleotide exchange factor for DnaK and may function as a thermosensor. Unfolded proteins bind initially to DnaJ; upon interaction with the DnaJ-bound protein, DnaK hydrolyzes its bound ATP, resulting in the formation of a stable complex. GrpE releases ADP from DnaK; ATP binding to DnaK triggers the release of the substrate protein, thus completing the reaction cycle. Several rounds of ATP-dependent interactions between DnaJ, DnaK and GrpE are required for fully efficient folding. The sequence is that of Protein GrpE from Pectobacterium carotovorum subsp. carotovorum (strain PC1).